We begin with the raw amino-acid sequence, 54 residues long: Sec-independent protein translocase protein TatA (54 aa).

A helical transmembrane segment spans residues 1 to 21 (MGMSFSHLLIVLLIIFVLFGA).

The protein belongs to the TatA/E family. The Tat system comprises two distinct complexes: a TatABC complex, containing multiple copies of TatA, TatB and TatC subunits, and a separate TatA complex, containing only TatA subunits. Substrates initially bind to the TatABC complex, which probably triggers association of the separate TatA complex to form the active translocon.

It is found in the cell inner membrane. In terms of biological role, part of the twin-arginine translocation (Tat) system that transports large folded proteins containing a characteristic twin-arginine motif in their signal peptide across membranes. TatA could form the protein-conducting channel of the Tat system. In Rickettsia canadensis (strain McKiel), this protein is Sec-independent protein translocase protein TatA.